Reading from the N-terminus, the 45-residue chain is Iota-conotoxin-like R11.10 (45 aa).

Disulfide bonds link C5–C19, C12–C22, C18–C27, and C21–C36. L43 carries the D-leucine modification. A propeptide (removed by a carboxypeptidase) is located at residue R45.

This sequence belongs to the conotoxin I1 superfamily. Expressed by the venom duct.

Its subcellular location is the secreted. In terms of biological role, iota-conotoxins bind to voltage-gated sodium channels (Nav) and act as agonists by shifting the voltage-dependence of activation to more hyperpolarized levels. Produces general excitatory symptoms. This Conus radiatus (Rayed cone) protein is Iota-conotoxin-like R11.10.